Consider the following 197-residue polypeptide: Large ribosomal subunit protein bL25 (197 aa).

The protein belongs to the bacterial ribosomal protein bL25 family. CTC subfamily. Part of the 50S ribosomal subunit; part of the 5S rRNA/L5/L18/L25 subcomplex. Contacts the 5S rRNA. Binds to the 5S rRNA independently of L5 and L18.

Functionally, this is one of the proteins that binds to the 5S RNA in the ribosome where it forms part of the central protuberance. The sequence is that of Large ribosomal subunit protein bL25 from Lawsonia intracellularis (strain PHE/MN1-00).